The sequence spans 266 residues: Putative carbamate hydrolase RutD (266 aa).

This sequence belongs to the AB hydrolase superfamily. Hydrolase RutD family.

The enzyme catalyses carbamate + 2 H(+) = NH4(+) + CO2. Its function is as follows. Involved in pyrimidine catabolism. May facilitate the hydrolysis of carbamate, a reaction that can also occur spontaneously. In Escherichia coli O150:H5 (strain SE15), this protein is Putative carbamate hydrolase RutD.